The primary structure comprises 244 residues: Ribonuclease HII (244 aa).

The region spanning 23-236 is the RNase H type-2 domain; it reads KIILGLDEAG…SKKLLKEFEE (214 aa). Residues Asp29, Glu30, and Asp130 each contribute to the a divalent metal cation site.

It belongs to the RNase HII family. Mn(2+) serves as cofactor. It depends on Mg(2+) as a cofactor.

It localises to the cytoplasm. The catalysed reaction is Endonucleolytic cleavage to 5'-phosphomonoester.. Functionally, endonuclease that specifically degrades the RNA of RNA-DNA hybrids. The polypeptide is Ribonuclease HII (Methanococcus vannielii (strain ATCC 35089 / DSM 1224 / JCM 13029 / OCM 148 / SB)).